Reading from the N-terminus, the 493-residue chain is MTTVRTRIAPSPTGDPHVGTAYIALFNLCFARQHGGQFILRIEDTDQLRSTRESEQQIFDALRWLGIEWDEGPDVGGPHGPYRQSERGEIYKQYSDELVAKGHAFPCFCSAERLDEVRAQQMANKETPRYDGHCMHLDPAEAQRRIAAGESHVVRMKVPSEGVCVVPDMLRGDVEIPWDRMDMQVLMKADGLPTYFLANVVDDHLMGITHVLRGEEWLPSAPKLIKLYEYFGWEQPALCYMPLLRNPDKSKLSKRKNPTSITFYERMGYLPQAMLNYLGRMGWSMPDEREKFSLNEMIEHFDINRVSLGGPIFDLEKLSWLNGQWLRELPVETFAAEVQKWALNPEYLMKIAPHVQGRVETFSQIAPLAGFFFSGALNLDAKLFEHKKLSPDQVRQLMQLILWKLESLRQWEKERITGCIQAVVEHLELKLRDAMPLMFAAITGQASSVSVLDAMEILGPDLTRFRLRQALELLGGTSKKETKEWEKLLASIA.

Positions 10 to 20 (PSPTGDPHVGT) match the 'HIGH' region motif. Zn(2+) contacts are provided by C107, C109, C134, and H136. The 'KMSKS' region motif lies at 251–255 (KLSKR). ATP is bound at residue K254.

This sequence belongs to the class-I aminoacyl-tRNA synthetase family. Glutamate--tRNA ligase type 1 subfamily. Monomer. Zn(2+) serves as cofactor.

The protein localises to the cytoplasm. The enzyme catalyses tRNA(Glu) + L-glutamate + ATP = L-glutamyl-tRNA(Glu) + AMP + diphosphate. Catalyzes the attachment of glutamate to tRNA(Glu) in a two-step reaction: glutamate is first activated by ATP to form Glu-AMP and then transferred to the acceptor end of tRNA(Glu). The protein is Glutamate--tRNA ligase of Ectopseudomonas mendocina (strain ymp) (Pseudomonas mendocina).